We begin with the raw amino-acid sequence, 287 residues long: Pyridoxal kinase PdxY (287 aa).

Substrate is bound by residues Ser9 and 44-45 (MQ). 4 residues coordinate ATP: Asp111, Ala142, Glu147, and Lys180. Asp221 contributes to the substrate binding site.

This sequence belongs to the pyridoxine kinase family. PdxY subfamily. Homodimer. Requires Mg(2+) as cofactor.

The catalysed reaction is pyridoxal + ATP = pyridoxal 5'-phosphate + ADP + H(+). It functions in the pathway cofactor metabolism; pyridoxal 5'-phosphate salvage; pyridoxal 5'-phosphate from pyridoxal: step 1/1. Its function is as follows. Pyridoxal kinase involved in the salvage pathway of pyridoxal 5'-phosphate (PLP). Catalyzes the phosphorylation of pyridoxal to PLP. This is Pyridoxal kinase PdxY from Burkholderia pseudomallei (strain K96243).